The chain runs to 367 residues: Developmentally-regulated GTP-binding protein 1 (367 aa).

Residues 2 to 16 are required for interaction with STK16; it reads SGTLARIAEIEAEMA. The 226-residue stretch at 65–290 folds into the OBG-type G domain; it reads ARIGFVGFPS…LLEKIWDYLQ (226 aa). GTP contacts are provided by residues 71-78, 96-100, 117-120, 248-251, and 271-273; these read GFPSVGKS, FTTLT, DLPG, NKID, and SAH. Residues S78 and T98 each contribute to the Mg(2+) site. A TGS domain is found at 290-366; that stretch reads QLVRIYTKPK…EDEDVIQIVK (77 aa).

Belongs to the TRAFAC class OBG-HflX-like GTPase superfamily. OBG GTPase family. Mg(2+) is required as a cofactor. K(+) serves as cofactor. In terms of tissue distribution, expressed in many adult amd embryonic tissues. In adults, highest levels in ovaries and testes, followed by skeletal muscle, stomach, brain, kidney and liver. Weak expression in heart and brain.

Its subcellular location is the nucleus. The protein resides in the cytoplasm. It catalyses the reaction GTP + H2O = GDP + phosphate + H(+). Functionally, catalyzes the conversion of GTP to GDP through hydrolysis of the gamma-phosphate bond in GTP. Binds to microtubules and promotes microtubule polymerization and bundling. GTPase activity is not necessary for these microtubule-related functions. The chain is Developmentally-regulated GTP-binding protein 1 (drg1) from Xenopus laevis (African clawed frog).